A 158-amino-acid chain; its full sequence is Ribonuclease H (158 aa).

One can recognise an RNase H type-1 domain in the interval 2-143 (PEKIIELFTD…VDALLNRVMD (142 aa)). Positions 11, 49, 71, and 135 each coordinate Mg(2+).

It belongs to the RNase H family. In terms of assembly, monomer. It depends on Mg(2+) as a cofactor.

It localises to the cytoplasm. It catalyses the reaction Endonucleolytic cleavage to 5'-phosphomonoester.. Endonuclease that specifically degrades the RNA of RNA-DNA hybrids. The polypeptide is Ribonuclease H (Acidithiobacillus ferrooxidans (strain ATCC 23270 / DSM 14882 / CIP 104768 / NCIMB 8455) (Ferrobacillus ferrooxidans (strain ATCC 23270))).